The chain runs to 28 residues: Conotoxin de7b (28 aa).

3 disulfides stabilise this stretch: Cys2–Cys18, Cys9–Cys22, and Cys17–Cys27. 4-hydroxyproline; partial is present on Pro4. The residue at position 7 (Glu7) is a 4-carboxyglutamate; partial. Position 14 is a 4-hydroxyproline; partial (Pro14).

Expressed by the venom duct.

It localises to the secreted. In terms of biological role, may inhibit sodium (Nav) or calcium channels (Cav). This is Conotoxin de7b from Conasprella delessertii (Sozon's cone).